An 87-amino-acid polypeptide reads, in one-letter code: HssA/B-like protein 31 (87 aa).

This sequence belongs to the hssA/B family.

The protein is HssA/B-like protein 31 (hssl31) of Dictyostelium discoideum (Social amoeba).